Reading from the N-terminus, the 59-residue chain is Cuticle protein 7 isoform b (59 aa).

Position 1 is a pyrrolidone carboxylic acid (Gln-1).

In Limulus polyphemus (Atlantic horseshoe crab), this protein is Cuticle protein 7 isoform b.